Here is a 208-residue protein sequence, read N- to C-terminus: Thymidylate kinase (208 aa).

10–17 (GIDGCGKT) provides a ligand contact to ATP.

This sequence belongs to the thymidylate kinase family.

It carries out the reaction dTMP + ATP = dTDP + ADP. Functionally, phosphorylation of dTMP to form dTDP in both de novo and salvage pathways of dTTP synthesis. This is Thymidylate kinase from Caldanaerobacter subterraneus subsp. tengcongensis (strain DSM 15242 / JCM 11007 / NBRC 100824 / MB4) (Thermoanaerobacter tengcongensis).